Reading from the N-terminus, the 275-residue chain is Large ribosomal subunit protein uL2 (275 aa).

Residues 224-275 (VMNPVDHPHGGGEGKSPIGRPSPVTPWGKPTLGYKTRKKNKASDKFIIKRRK) are disordered. Residues 264–275 (KASDKFIIKRRK) show a composition bias toward basic and acidic residues.

Belongs to the universal ribosomal protein uL2 family. Part of the 50S ribosomal subunit. Forms a bridge to the 30S subunit in the 70S ribosome.

In terms of biological role, one of the primary rRNA binding proteins. Required for association of the 30S and 50S subunits to form the 70S ribosome, for tRNA binding and peptide bond formation. It has been suggested to have peptidyltransferase activity; this is somewhat controversial. Makes several contacts with the 16S rRNA in the 70S ribosome. The sequence is that of Large ribosomal subunit protein uL2 from Acetivibrio thermocellus (strain ATCC 27405 / DSM 1237 / JCM 9322 / NBRC 103400 / NCIMB 10682 / NRRL B-4536 / VPI 7372) (Clostridium thermocellum).